The primary structure comprises 481 residues: UDP-N-acetylmuramoyl-L-alanyl-D-glutamate--L-lysine ligase (481 aa).

A UDP-N-acetyl-alpha-D-muramoyl-L-alanyl-D-glutamate-binding site is contributed by Ser-42. Residue 118–124 participates in ATP binding; sequence GTKGKTT. UDP-N-acetyl-alpha-D-muramoyl-L-alanyl-D-glutamate-binding positions include 160-161, Ser-187, and Arg-195; that span reads TT. Lys-229 carries the post-translational modification N6-carboxylysine. An L-lysine recognition motif motif is present at residues 404 to 407; sequence DDPN.

The protein belongs to the MurCDEF family. MurE subfamily. Post-translationally, carboxylation is probably crucial for Mg(2+) binding and, consequently, for the gamma-phosphate positioning of ATP.

The protein localises to the cytoplasm. It carries out the reaction UDP-N-acetyl-alpha-D-muramoyl-L-alanyl-D-glutamate + L-lysine + ATP = UDP-N-acetyl-alpha-D-muramoyl-L-alanyl-gamma-D-glutamyl-L-lysine + ADP + phosphate + H(+). Its pathway is cell wall biogenesis; peptidoglycan biosynthesis. In terms of biological role, catalyzes the addition of L-lysine to the nucleotide precursor UDP-N-acetylmuramoyl-L-alanyl-D-glutamate (UMAG) in the biosynthesis of bacterial cell-wall peptidoglycan. The protein is UDP-N-acetylmuramoyl-L-alanyl-D-glutamate--L-lysine ligase of Streptococcus sanguinis (strain SK36).